The following is an 819-amino-acid chain: Leucine--tRNA ligase (819 aa).

The 'HIGH' region motif lies at 36-46; it reads PYPSGKIHMGH. Positions 586 to 590 match the 'KMSKS' region motif; the sequence is KMSKS. ATP is bound at residue Lys589.

It belongs to the class-I aminoacyl-tRNA synthetase family.

The protein localises to the cytoplasm. The enzyme catalyses tRNA(Leu) + L-leucine + ATP = L-leucyl-tRNA(Leu) + AMP + diphosphate. This is Leucine--tRNA ligase from Wolbachia pipientis subsp. Culex pipiens (strain wPip).